Reading from the N-terminus, the 164-residue chain is Interferon gamma (164 aa).

The N-terminal stretch at 1-19 is a signal peptide; the sequence is MTCQTYNLFVLSVIMIYYG. N-linked (GlcNAc...) asparagine glycans are attached at residues Asn-42 and Asn-61.

This sequence belongs to the type II (or gamma) interferon family. In terms of assembly, homodimer.

It is found in the secreted. Its function is as follows. Produced by lymphocytes activated by specific antigens or mitogens. IFN-gamma, in addition to having antiviral activity, has important immunoregulatory functions. It is a potent activator of macrophages, it has antiproliferative effects on transformed cells and it can potentiate the antiviral and antitumor effects of the type I interferons. The sequence is that of Interferon gamma (IFNG) from Phasianus colchicus colchicus (Black-necked pheasant).